The following is a 352-amino-acid chain: Ion-translocating oxidoreductase complex subunit D (352 aa).

The next 4 helical transmembrane spans lie at 20–40 (IMLL…WFFG), 42–62 (GTLV…ALVL), 89–109 (IPPL…VIIA), and 123–143 (PAMI…TSWL). An FMN phosphoryl threonine modification is found at Thr-187. 5 helical membrane passes run 214–234 (ILAG…GVWL), 242–262 (WHIP…GWLF), 267–287 (LAAP…FFIL), 301–321 (LIFG…GGYP), and 322–342 (DGVA…DYYT).

This sequence belongs to the NqrB/RnfD family. In terms of assembly, the complex is composed of six subunits: RsxA, RsxB, RsxC, RsxD, RsxE and RsxG. Requires FMN as cofactor.

It is found in the cell inner membrane. Functionally, part of a membrane-bound complex that couples electron transfer with translocation of ions across the membrane. Required to maintain the reduced state of SoxR. This Escherichia coli O127:H6 (strain E2348/69 / EPEC) protein is Ion-translocating oxidoreductase complex subunit D.